Consider the following 515-residue polypeptide: Forkhead box protein H1 (515 aa).

A disordered region spans residues Tyr55–Lys103. Over residues Pro73–Glu84 the composition is skewed to polar residues. Positions Lys110–Arg206 form a DNA-binding region, fork-head. Positions Tyr307–Ser399 are disordered. Over residues Ser322–Ser339 the composition is skewed to low complexity. Residues Ser375–Pro388 are compositionally biased toward polar residues. An SMAD-interaction domain (SID) region spans residues Pro377–Ser503. Positions Leu402–Tyr406 match the Fast/FoxH1 motif 1 (FM1) motif. Positions Pro412–Pro418 match the Fast/FoxH1 motif 2 (FM2) motif. An SMAD-interaction motif (SIM) motif is present at residues Leu467–Pro488.

ARF1 contains 2 smad2s, 1 smad4 and 1 foxh1/fast-1 protein. Interaction with smad4 is most likely indirect through interaction with the MH2 domain of smad2. Binds to the MH2 domain of smad3, which can incorporate into the ARF1 complex. The ARF1 and ARF2 complexes are activated by distinct TGF-beta family members; formation of ARF1 is promoted by activin. Interacts (via Fork-head domain) with gtf2ird1/wbscr11 (via repeats 4-5).

The protein localises to the nucleus. Transcriptional activator. Recognizes and binds to the DNA sequence 5'-TGT[GT][GT]ATT-3'. Upon TGF-beta induction, forms a transcriptionally active complex with smad2 and smad4 called activin-responsive factor 1 (ARF1), which binds a site on the mix-B/mix.2 promoter called the activin response element (ARE). Binds to activated smads and the ARE with much lower affinity than fast3. Necessary for the first steps in mesoderm specification, directly inducing mesodermal genes. Acts with fast3 to control the convergent extension movements of gastrulation. Binds to the proximal element (PE) of the gsc gene and cooperates with gtf2ird1/wbscr11 and SMAD proteins to regulate gsc transcription. This Xenopus tropicalis (Western clawed frog) protein is Forkhead box protein H1.